A 258-amino-acid polypeptide reads, in one-letter code: MARSGFEVQKVTVEALFLREIRTRFGKFRLGYLWAILEPSAHLLILLGIFGYIMHRTMPDISFPVFLLNGLIPFFIFSSISNRSVGAIEANQGLFNYRPVKPIDTIIARALLETLIYVAVYILLMLIVWMAGEYFEITNFLQLVLTWSLLIILSCGIGLIFMVVGKTFPEMQKVLPILLKPLYFISCIMFPLHSIPKQYWSYLLWNPLVHVVELSREAVMPGYISEGVSLNYLAMFTLVTLFIGLALYRTREEAMLTS.

One can recognise an ABC transmembrane type-2 domain in the interval 30–251; sequence LGYLWAILEP…FIGLALYRTR (222 aa). The next 6 helical transmembrane spans lie at 33–53, 61–81, 110–130, 144–164, 175–195, and 227–247; these read LWAILEPSAHLLILLGIFGYI, ISFPVFLLNGLIPFFIFSSIS, ALLETLIYVAVYILLMLIVWM, VLTWSLLIILSCGIGLIFMVV, LPILLKPLYFISCIMFPLHSI, and GVSLNYLAMFTLVTLFIGLAL.

Belongs to the ABC-2 integral membrane protein family.

Its subcellular location is the cell inner membrane. Its function is as follows. KpsM and KpsT constitute a system for the transport of polysialic acid across the cytoplasmic membrane. The sequence is that of Polysialic acid transport protein KpsM (kpsM) from Escherichia coli.